A 557-amino-acid polypeptide reads, in one-letter code: Aerobic glycerol-3-phosphate dehydrogenase (557 aa).

FAD is bound at residue 21–49 (DLVIIGGGITGAGIALDASERGMKVALVE).

Belongs to the FAD-dependent glycerol-3-phosphate dehydrogenase family. Requires FAD as cofactor.

Its subcellular location is the cytoplasm. It carries out the reaction a quinone + sn-glycerol 3-phosphate = dihydroxyacetone phosphate + a quinol. It participates in polyol metabolism; glycerol degradation via glycerol kinase pathway; glycerone phosphate from sn-glycerol 3-phosphate (aerobic route): step 1/1. The chain is Aerobic glycerol-3-phosphate dehydrogenase (glpD) from Staphylococcus aureus (strain MRSA252).